The sequence spans 510 residues: Hexose carrier protein HEX6 (510 aa).

Topologically, residues 1–22 (MAAGLAITSEGGQYNGRMTSFV) are cytoplasmic. 12 helical membrane-spanning segments follow: residues 23 to 43 (ALSC…IGVS), 83 to 103 (SFTS…SSVT), 118 to 128 (VFLAXAALGGA), 140 to 160 (VLLG…LSEM), 169 to 189 (INNG…LINY), 202 to 222 (ISLA…LFLP), 284 to 304 (LVMA…VIAF), 325 to 345 (IVTG…VDKL), 349 to 369 (ALFI…GSIM), 382 to 402 (GYAY…GWSW), 428 to 448 (AVSF…LCHF), and 451 to 471 (GIFF…HFLL). Residues 472 to 510 (PETKKVPIEKMDIVWRDHWFWKKIIGEEAAEENNKMEAA) are Cytoplasmic-facing.

Belongs to the major facilitator superfamily. Sugar transporter (TC 2.A.1.1) family.

It is found in the membrane. Functionally, active uptake of hexoses. Probable glucose/hydrogen symport. The polypeptide is Hexose carrier protein HEX6 (HEX6) (Ricinus communis (Castor bean)).